The sequence spans 501 residues: L-arabinose isomerase (501 aa).

The Mn(2+) site is built by Glu-306, Glu-333, His-350, and His-450.

It belongs to the arabinose isomerase family. Homohexamer. Mn(2+) serves as cofactor.

It carries out the reaction beta-L-arabinopyranose = L-ribulose. It participates in carbohydrate degradation; L-arabinose degradation via L-ribulose; D-xylulose 5-phosphate from L-arabinose (bacterial route): step 1/3. Catalyzes the conversion of L-arabinose to L-ribulose. This chain is L-arabinose isomerase, found in Erwinia tasmaniensis (strain DSM 17950 / CFBP 7177 / CIP 109463 / NCPPB 4357 / Et1/99).